Consider the following 241-residue polypeptide: MAKGIFIVGTDTDIGKTVVTAGLMHVLRSRGYNAVYFKAALSGALEIDNKLIPSDTKLVSDVSKLEEPYENITPYVYRTGVSPHLAARLENNPMDLDIVKEKYVYLKEKYDFIIAEGSGGIVCPLIDDGRGVYTIGNLIKDLNMSVIIVASAGLGTINHTVLTAKYIENLGIKIEGIIINKYEKDLFYDDNIGMIEKITKLPIVAKLKNIKDMNDNEIEAIRIHSEKAFSAENIIKHMEQL.

Residue 13–18 (DIGKTV) coordinates ATP. Mg(2+) is bound at residue T17. Residue K38 is part of the active site. Substrate is bound at residue S42. ATP-binding positions include D55, 116–119 (EGSG), and 180–181 (NK). Positions 55 and 116 each coordinate Mg(2+).

It belongs to the dethiobiotin synthetase family. As to quaternary structure, homodimer. Mg(2+) serves as cofactor.

The protein resides in the cytoplasm. It carries out the reaction (7R,8S)-7,8-diammoniononanoate + CO2 + ATP = (4R,5S)-dethiobiotin + ADP + phosphate + 3 H(+). It functions in the pathway cofactor biosynthesis; biotin biosynthesis; biotin from 7,8-diaminononanoate: step 1/2. Its function is as follows. Catalyzes a mechanistically unusual reaction, the ATP-dependent insertion of CO2 between the N7 and N8 nitrogen atoms of 7,8-diaminopelargonic acid (DAPA, also called 7,8-diammoniononanoate) to form a ureido ring. This chain is ATP-dependent dethiobiotin synthetase BioD, found in Clostridium kluyveri (strain NBRC 12016).